A 347-amino-acid polypeptide reads, in one-letter code: P2Y purinoceptor 12 (347 aa).

Over 1-33 (MDVPGVNTTSANTTFSPGTSTLCVRDYKITQVL) the chain is Extracellular. Residues Asn7 and Asn12 are each glycosylated (N-linked (GlcNAc...) asparagine). Intrachain disulfides connect Cys23-Cys276 and Cys103-Cys181. Residues 34 to 56 (FPLLYTVLFFAGLITNSLAMRIF) form a helical membrane-spanning segment. The Cytoplasmic segment spans residues 57-67 (FQIRSKSNFII). Ser61 and Ser63 each carry phosphoserine. Residues 68–88 (FLKNTVISDLLMILTFPFKIL) form a helical membrane-spanning segment. The Extracellular portion of the chain corresponds to 89–103 (SDAKLGAGPLRTLVC). 3 residues coordinate ADP: Arg99, Cys103, and Tyr111. Residues 104–124 (QVTSVTFYFTMYISISFLGLI) traverse the membrane as a helical segment. Residues 125–148 (TIDRYLKTTRPFKTSSPSNLLGAK) are Cytoplasmic-facing. Residues 149 to 168 (ILSVVIWAFMFLISLPNMIL) traverse the membrane as a helical segment. ADP contacts are provided by residues 162–165 (SLPN), 181–185 (CSFLK), His193, and Asn197. Over 169–191 (TNRRPKDKDVTKCSFLKSEFGLV) the chain is Extracellular. A helical membrane pass occupies residues 192–213 (WHEIVNYICQVIFWINFLIVIV). Topologically, residues 214-239 (CYSLITKELYRSYVRTRGSAKVPKKK) are cytoplasmic. Residues 240 to 265 (VNVKVFIIIAVFFICFVPFHFARIPY) traverse the membrane as a helical segment. Residues 262–265 (RIPY), Gln269, and Lys286 contribute to the ADP site. Topologically, residues 266 to 284 (TLSQTRAVFDCSAENTLFY) are extracellular. Residues 285–304 (VKESTLWLTSLNACLDPFIY) form a helical membrane-spanning segment. The Cytoplasmic portion of the chain corresponds to 305–347 (FFLCKSFRNSLTSMLRCSNSTSTSGTNKKKGQEGGEPSEETPM). Residues 321 to 347 (CSNSTSTSGTNKKKGQEGGEPSEETPM) form a disordered region.

Belongs to the G-protein coupled receptor 1 family.

The protein resides in the cell membrane. Functionally, receptor for ADP and ATP coupled to G-proteins that inhibit the adenylyl cyclase second messenger system. Required for normal platelet aggregation and blood coagulation. This chain is P2Y purinoceptor 12 (P2ry12), found in Mus musculus (Mouse).